Consider the following 123-residue polypeptide: Small ribosomal subunit protein uS12 (123 aa).

Asp-89 carries the post-translational modification 3-methylthioaspartic acid.

Belongs to the universal ribosomal protein uS12 family. As to quaternary structure, part of the 30S ribosomal subunit. Contacts proteins S8 and S17. May interact with IF1 in the 30S initiation complex.

Its function is as follows. With S4 and S5 plays an important role in translational accuracy. Interacts with and stabilizes bases of the 16S rRNA that are involved in tRNA selection in the A site and with the mRNA backbone. Located at the interface of the 30S and 50S subunits, it traverses the body of the 30S subunit contacting proteins on the other side and probably holding the rRNA structure together. The combined cluster of proteins S8, S12 and S17 appears to hold together the shoulder and platform of the 30S subunit. The polypeptide is Small ribosomal subunit protein uS12 (Acidiphilium cryptum (strain JF-5)).